The chain runs to 97 residues: Eclosion hormone (97 aa).

The N-terminal stretch at 1-17 (MNCKPLILCTFVAVAMC) is a signal peptide. Intrachain disulfides connect cysteine 48-cysteine 72, cysteine 52-cysteine 68, and cysteine 55-cysteine 83.

This sequence belongs to the insect eclosion hormone family. Expressed in a single pair of brain neurons which extend their processes the entire length of the central nervous system and also to the corpora cardiaca portion of the ring gland. These cells show massive depletion of immunoreactive Eh at ecdysis.

It is found in the secreted. Functionally, neuropeptide that triggers the performance of ecdysis behaviors at the end of a molt. It triggers adult behavior patterns: larval, pupal and adult ecdysis, and plasticization during the molt. This chain is Eclosion hormone (Eh), found in Drosophila melanogaster (Fruit fly).